Here is a 457-residue protein sequence, read N- to C-terminus: Tryptophan aminotransferase-related protein 3 (457 aa).

A helical membrane pass occupies residues 6-26; that stretch reads LLIAGSIILNLVFTIHILYNN. Residues Y123, 163–164, N237, 257–260, 280–283, and R291 each bind pyridoxal 5'-phosphate; these read AT, DYAY, and SLSK. K283 bears the N6-(pyridoxal phosphate)lysine mark.

Belongs to the alliinase family. Requires pyridoxal 5'-phosphate as cofactor.

It localises to the membrane. Its function is as follows. Probable aminotransferase. This Arabidopsis thaliana (Mouse-ear cress) protein is Tryptophan aminotransferase-related protein 3 (TAR3).